Consider the following 349-residue polypeptide: tRNA-specific 2-thiouridylase MnmA (349 aa).

Residues 6 to 13 (LLSGGVDS) and Met-32 each bind ATP. Cys-103 acts as the Nucleophile in catalysis. Cys-103 and Cys-195 are oxidised to a cystine. An ATP-binding site is contributed by Gly-127. Residues 145–147 (KDQ) are interaction with tRNA. Residue Cys-195 is the Cysteine persulfide intermediate of the active site.

This sequence belongs to the MnmA/TRMU family.

The protein resides in the cytoplasm. It carries out the reaction S-sulfanyl-L-cysteinyl-[protein] + uridine(34) in tRNA + AH2 + ATP = 2-thiouridine(34) in tRNA + L-cysteinyl-[protein] + A + AMP + diphosphate + H(+). Its function is as follows. Catalyzes the 2-thiolation of uridine at the wobble position (U34) of tRNA, leading to the formation of s(2)U34. This is tRNA-specific 2-thiouridylase MnmA from Pseudothermotoga lettingae (strain ATCC BAA-301 / DSM 14385 / NBRC 107922 / TMO) (Thermotoga lettingae).